Consider the following 141-residue polypeptide: Large ribosomal subunit protein uL16 (141 aa).

Belongs to the universal ribosomal protein uL16 family. In terms of assembly, part of the 50S ribosomal subunit.

Its function is as follows. Binds 23S rRNA and is also seen to make contacts with the A and possibly P site tRNAs. The polypeptide is Large ribosomal subunit protein uL16 (Geobacillus kaustophilus (strain HTA426)).